The primary structure comprises 333 residues: Photosystem II assembly lipoprotein Ycf48 (333 aa).

The N-terminal stretch at 1 to 23 (MNRLLSSAVNLLLVLVLGVGLSG) is a signal peptide. Cysteine 24 carries the N-palmitoyl cysteine lipid modification. Cysteine 24 carries the S-diacylglycerol cysteine lipid modification.

Belongs to the Ycf48 family. Part of early PSII assembly complexes which includes D1 (psbA) and PsbI; not found in mature PSII. Binds to the lumenal side of PSII complexes. Interacts with YidC.

It is found in the cellular thylakoid membrane. A factor required for optimal assembly of photosystem II (PSII), acting in the early stages of PSII assembly. Also plays a role in replacement of photodamaged D1 (psbA). Assists YidC in synthesis of chlorophyll-binding proteins. This is Photosystem II assembly lipoprotein Ycf48 from Synechococcus sp. (strain CC9902).